The primary structure comprises 460 residues: UDP-N-acetylmuramate--L-alanine ligase (460 aa).

118 to 124 (GAHGKTT) contacts ATP.

Belongs to the MurCDEF family.

Its subcellular location is the cytoplasm. The catalysed reaction is UDP-N-acetyl-alpha-D-muramate + L-alanine + ATP = UDP-N-acetyl-alpha-D-muramoyl-L-alanine + ADP + phosphate + H(+). It participates in cell wall biogenesis; peptidoglycan biosynthesis. Its function is as follows. Cell wall formation. This is UDP-N-acetylmuramate--L-alanine ligase from Clostridium botulinum (strain Eklund 17B / Type B).